A 1828-amino-acid polypeptide reads, in one-letter code: Protein TIC 214 (1828 aa).

6 helical membrane passes run 18–38 (IINSVVVVGLYYGFLTTFSIG), 64–84 (FITGQLMIFISIYYAPLHLAM), 87–107 (PYTITVLGLPYLLFHFFWKNH), 124–144 (FSIQSIFLNNFIFQLLNHFVL), 172–192 (VGWLIGHILFMKWVGLILFWI), and 222–242 (VNIFLFITCVYYLGRIPSPIL). Over residues 270–279 (SEAKETKQEQ) the composition is skewed to basic and acidic residues. 4 disordered regions span residues 270 to 301 (SEAKETKQEQKGSFAEEDSSLGSEEREDPNKL), 618 to 637 (DLQQQERENEEESTEDHAIR), 741 to 763 (EFKTSNSDEKETKEKEKKREDKK), and 1533 to 1571 (KEEFGQGNLGSDTQNQQKDVEKDYAKSDIKKRGKKRQSK). Basic and acidic residues predominate over residues 1550–1562 (KDVEKDYAKSDIK).

This sequence belongs to the TIC214 family. As to quaternary structure, part of the Tic complex.

It localises to the plastid. Its subcellular location is the chloroplast inner membrane. Its function is as follows. Involved in protein precursor import into chloroplasts. May be part of an intermediate translocation complex acting as a protein-conducting channel at the inner envelope. The polypeptide is Protein TIC 214 (Calycanthus floridus var. glaucus (Eastern sweetshrub)).